The primary structure comprises 135 residues: C-type lectin PAL (135 aa).

Disulfide bonds link Cys-3-Cys-14, Cys-31-Cys-131, Cys-38-Cys-133, and Cys-106-Cys-123. The C-type lectin domain maps to 10-132; that stretch reads MNGLCYKIFD…CGSKNAFLCQ (123 aa). Ca(2+) is bound by residues Gln-96, Asp-98, Glu-104, Asn-119, and Asp-120. The Galactose-binding motif lies at 96 to 98; it reads QPD.

It belongs to the true venom lectin family. As to quaternary structure, homodimer; disulfide-linked. In terms of tissue distribution, expressed by the venom gland.

The protein localises to the secreted. Its function is as follows. Galactose-binding lectin which recognizes specific carbohydrate structures and agglutinates a variety of animal cells by binding to cell-surface glycoproteins and glycolipids. This is a calcium-dependent lectin. Shows high hemagglutinating activity (MHC is 0.25 ug/ml on rabbit erythrocytes). The polypeptide is C-type lectin PAL (Bitis arietans (African puff adder)).